Reading from the N-terminus, the 266-residue chain is Early E1A protein (266 aa).

The interaction with RB1 in competition with E2F1 stretch occupies residues 39-47 (PSLYELYDL). Residues 75–145 (EGLFLPEPPV…AAAAADRERE (71 aa)) form an interaction with UBE2I region. Residues 98–102 (PQLHP) carry the PXLXP motif, interaction with host ZMYND11 motif. The LXCXE motif, interaction with host RB1 and TMEM173/STING signature appears at 107–111 (LLCYE). The segment at 159 to 179 (CKSCEHHRNSTGNTDLMCSLC) is a zinc-finger region. Positions 195 to 226 (NEPEPNSTLDGDERPSPPKLGSAVPEGVIKPV) are disordered. Positions 255-259 (PVDLS) match the PXDLS motif, CTBP-binding motif. A Nuclear localization signal motif is present at residues 261 to 265 (KRPRC).

Belongs to the adenoviridae E1A protein family. Interacts with host UBE2I; this interaction interferes with polySUMOylation. Interacts with host RB1; this interaction induces the aberrant dissociation of RB1-E2F1 complex thereby disrupting the activity of RB1 and activating E2F1-regulated genes. Interacts with host ATF7; the interaction enhances ATF7-mediated viral transactivation activity which requires the zinc binding domains of both proteins. Isoform early E1A 32 kDa protein and isoform early E1A 26 kDa protein interact (via N-terminus) with CUL1 and E3 ubiquitin ligase RBX1; these interactions inhibit RBX1-CUL1-dependent elongation reaction of ubiquitin chains and attenuate ubiquitination of SCF(FBXW7) target proteins. Interacts (via PXLXP motif) with host ZMYND11/BS69 (via MYND-type zinc finger); this interaction inhibits E1A mediated transactivation. Interacts with host EP300; this interaction stimulates the acetylation of RB1 by recruiting EP300 and RB1 into a multimeric-protein complex. Interacts with host CTBP1 and CTBP2; this interaction seems to potentiate viral replication. Interacts with host DCAF7. Interacts with host DYRK1A. Interacts with host KPNA4; this interaction allows E1A import into the host nucleus. Interacts with host EP400; this interaction stabilizes MYC. Interacts with host TBP protein; this interaction probably disrupts the TBP-TATA complex. Interacts (via LXCXE motif) with host TMEM173/STING; this interaction impairs the ability of TMEM173/STING to sense cytosolic DNA and promote the production of type I interferon (IFN-alpha and IFN-beta). Interacts (via C-terminus) with host ZBED1/hDREF (via C-terminus); the interaction is direct.

It is found in the host nucleus. Plays a role in viral genome replication by driving entry of quiescent cells into the cell cycle. Stimulation of progression from G1 to S phase allows the virus to efficiently use the cellular DNA replicating machinery to achieve viral genome replication. E1A protein has both transforming and trans-activating activities. Induces the disassembly of the E2F1 transcription factor from RB1 by direct competition for the same binding site on RB1, with subsequent transcriptional activation of E2F1-regulated S-phase genes and of the E2 region of the adenoviral genome. Release of E2F1 leads to the ARF-mediated inhibition of MDM2 and causes TP53/p53 to accumulate because it is not targeted for degradation by MDM2-mediated ubiquitination anymore. This increase in TP53, in turn, would arrest the cell proliferation and direct its death but this effect is counteracted by the viral protein E1B-55K. Inactivation of the ability of RB1 to arrest the cell cycle is critical for cellular transformation, uncontrolled cellular growth and proliferation induced by viral infection. Interaction with RBX1 and CUL1 inhibits ubiquitination of the proteins targeted by SCF(FBXW7) ubiquitin ligase complex, and may be linked to unregulated host cell proliferation. The tumorigenesis-restraining activity of E1A may be related to the disruption of the host CtBP-CtIP complex through the CtBP binding motif. Interaction with host TMEM173/STING impairs the ability of TMEM173/STING to sense cytosolic DNA and promote the production of type I interferon (IFN-alpha and IFN-beta). Promotes the sumoylation of host ZBED1/hDREF with SUMO1. In Homo sapiens (Human), this protein is Early E1A protein.